The primary structure comprises 478 residues: Uronate isomerase (478 aa).

The protein belongs to the metallo-dependent hydrolases superfamily. Uronate isomerase family.

The catalysed reaction is D-glucuronate = D-fructuronate. It catalyses the reaction aldehydo-D-galacturonate = keto-D-tagaturonate. It participates in carbohydrate metabolism; pentose and glucuronate interconversion. This Bacillus pumilus (strain SAFR-032) protein is Uronate isomerase.